Consider the following 610-residue polypeptide: Estrogen receptor beta-2 (610 aa).

Positions 1–170 (MSSSTGPAPA…GILGKGDTHF (170 aa)) are modulating. NR C4-type zinc fingers lie at residues 171–191 (CAVC…CEGC) and 207–231 (CPAT…LRKC). The segment at residues 171 to 236 (CAVCHDYASG…RLRKCYEVGM (66 aa)) is a DNA-binding region (nuclear receptor). Residues 302-538 (SPEQLVNCIL…DLLLEMLDAN (237 aa)) enclose the NR LBD domain. The tract at residues 566 to 596 (HTSKQQPALKESNQDTRHSPQAEGTVDKTLH) is disordered. The segment covering 577–596 (SNQDTRHSPQAEGTVDKTLH) has biased composition (basic and acidic residues).

The protein belongs to the nuclear hormone receptor family. NR3 subfamily. Binds DNA as a homodimer. Can form a heterodimer with ER-alpha. As to expression, predominantly expressed in pituitary, telencephalon and hypothalamus as well as in the liver.

The protein localises to the nucleus. In terms of biological role, binds estrogens with an affinity similar to that of ER-alpha, and activates expression of reporter genes containing estrogen response elements (ERE) in an estrogen-dependent manner. This is Estrogen receptor beta-2 (esr2b) from Carassius auratus (Goldfish).